The primary structure comprises 226 residues: UPF0173 metal-dependent hydrolase CHY_0920 (226 aa).

Belongs to the UPF0173 family.

The protein is UPF0173 metal-dependent hydrolase CHY_0920 of Carboxydothermus hydrogenoformans (strain ATCC BAA-161 / DSM 6008 / Z-2901).